Consider the following 375-residue polypeptide: MSLMVISMACVGFFLLQGAWTHEGGQDKPLLSAWPSAVVPRGGHVTLLCRSRLGFTIFSLYKEDGVPVPELYNKIFWKSILMGPVTPAHAGTYRCRGSHPRSPIEWSAPSNPLVIVVTGLFGKPSLSAQPGPTVRTGENVTLSCSSRSSFDMYHLSREGRAHEPRLPAVPSVNGTFQADFPLGPATHGGTYTCFGSLHDSPYEWSDPSDPLLVSVTGNSSSSSSSPTEPSSKTGIRRHLHILIGTSVAIILFIILFFFLLHCCCSNKKNAAVMDQEPAGDRTVNREDSDDQDPQEVTYAQLDHCVFTQTKITSPSQRPKTPPTDTTMYMELPNAKPRSLSPAHKHHSQALRGSSRETTALSQNRVASSHVPAAGI.

An N-terminal signal peptide occupies residues Met-1 to Thr-21. Residues His-22–His-238 lie on the Extracellular side of the membrane. Ig-like C2-type domains lie at Gly-42–Ser-102 and Gly-137–Ser-200. Cys-49 and Cys-95 form a disulfide bridge. N-linked (GlcNAc...) asparagine glycans are attached at residues Asn-139, Asn-173, and Asn-218. A disulfide bond links Cys-144 and Cys-193. The disordered stretch occupies residues Val-213 to Thr-233. Over residues Ser-219–Ser-231 the composition is skewed to low complexity. The chain crosses the membrane as a helical span at residues Leu-239–Leu-259. Over Leu-260–Ile-375 the chain is Cytoplasmic. Residues Ala-334–Ile-375 form a disordered region. A compositionally biased stretch (polar residues) spans Arg-355–Ala-366.

The protein belongs to the immunoglobulin superfamily.

The protein localises to the cell membrane. Its function is as follows. Receptor on natural killer (NK) cells for HLA-C alleles. Inhibits the activity of NK cells thus preventing cell lysis. The sequence is that of Killer cell immunoglobulin-like receptor 2DL5A (KIR2DL5A) from Homo sapiens (Human).